A 296-amino-acid chain; its full sequence is Co-chaperone protein DjlA (296 aa).

Residues 1–15 (MNLRDFFVITTWWGK) lie on the Periplasmic side of the membrane. A helical transmembrane segment spans residues 16-39 (ILGAFFGYLTAGPVGALFGILVGN). Residues 40–296 (FFDRGLVSYY…YELICETKGW (257 aa)) lie on the Cytoplasmic side of the membrane. Residues 200-225 (QHYHNQQEYKHTSSSQGQQGYKPQSP) form a disordered region. The segment covering 211–221 (TSSSQGQQGYK) has biased composition (polar residues). A J domain is found at 231-296 (HAFALLEVSP…YELICETKGW (66 aa)).

In terms of assembly, homodimer.

It is found in the cell inner membrane. Functionally, regulatory DnaK co-chaperone. Direct interaction between DnaK and DjlA is needed for the induction of the wcaABCDE operon, involved in the synthesis of a colanic acid polysaccharide capsule, possibly through activation of the RcsB/RcsC phosphotransfer signaling pathway. The colanic acid capsule may help the bacterium survive conditions outside the host. The chain is Co-chaperone protein DjlA from Legionella pneumophila subsp. pneumophila (strain Philadelphia 1 / ATCC 33152 / DSM 7513).